A 494-amino-acid polypeptide reads, in one-letter code: UPF0371 protein SPH_0451 (494 aa).

Belongs to the UPF0371 family.

In Streptococcus pneumoniae (strain Hungary19A-6), this protein is UPF0371 protein SPH_0451.